The sequence spans 465 residues: Putative F-box/LRR-repeat protein At3g28410 (465 aa).

The F-box domain maps to Ala27–Lys73. LRR repeat units follow at residues Val127–Leu155, Phe178–Thr203, Leu207–Arg225, Ala278–Glu302, Phe332–Thr357, Thr402–Leu427, and Val447–Cys465.

The chain is Putative F-box/LRR-repeat protein At3g28410 from Arabidopsis thaliana (Mouse-ear cress).